Here is a 232-residue protein sequence, read N- to C-terminus: GTP cyclohydrolase III (232 aa).

The protein belongs to the archaeal-type GTP cyclohydrolase family.

The enzyme catalyses GTP + 3 H2O = 2-amino-5-formylamino-6-(5-phospho-D-ribosylamino)pyrimidin-4(3H)-one + 2 phosphate + 2 H(+). Catalyzes the formation of 2-amino-5-formylamino-6-ribofuranosylamino-4(3H)-pyrimidinone ribonucleotide monophosphate and inorganic phosphate from GTP. Also has an independent pyrophosphate phosphohydrolase activity. This Saccharolobus islandicus (strain Y.G.57.14 / Yellowstone #1) (Sulfolobus islandicus) protein is GTP cyclohydrolase III.